The primary structure comprises 251 residues: 2,3-bisphosphoglycerate-dependent phosphoglycerate mutase (251 aa).

Substrate-binding positions include 11-18 (RHGESDWN), 24-25 (TG), Arg63, 90-93 (ERHY), Lys101, 117-118 (RR), and 184-185 (GN). His12 acts as the Tele-phosphohistidine intermediate in catalysis. Catalysis depends on Glu90, which acts as the Proton donor/acceptor.

It belongs to the phosphoglycerate mutase family. BPG-dependent PGAM subfamily.

It carries out the reaction (2R)-2-phosphoglycerate = (2R)-3-phosphoglycerate. It functions in the pathway carbohydrate degradation; glycolysis; pyruvate from D-glyceraldehyde 3-phosphate: step 3/5. Its function is as follows. Catalyzes the interconversion of 2-phosphoglycerate and 3-phosphoglycerate. The sequence is that of 2,3-bisphosphoglycerate-dependent phosphoglycerate mutase from Mycobacterium marinum (strain ATCC BAA-535 / M).